Here is a 257-residue protein sequence, read N- to C-terminus: Distal membrane-arm assembly complex protein 2 (257 aa).

Residue Ser-253 is modified to Phosphoserine.

Belongs to the ATP synthase subunit s family. As to quaternary structure, interacts with incompletely assembled mitochondrial NADH:ubiquinone oxidoreductase complex (complex I).

The protein resides in the mitochondrion. In terms of biological role, required for the assembly of the mitochondrial NADH:ubiquinone oxidoreductase complex (complex I). Involved in the assembly of the distal region of complex I. This Homo sapiens (Human) protein is Distal membrane-arm assembly complex protein 2.